A 182-amino-acid chain; its full sequence is Troponin I, fast skeletal muscle (182 aa).

Glycine 2 carries the N-acetylglycine modification. Positions 2–48 (GDEEKRNRAITARRQHLKSVMLQIAATELEKEESRREAEKQNYLAEH) are involved in binding TNC. Threonine 12 carries the phosphothreonine modification. The interval 97 to 117 (NQKLFDLRGKFKRPPLRRVRM) is involved in binding TNC and actin. Serine 118 carries the post-translational modification Phosphoserine.

The protein belongs to the troponin I family. As to quaternary structure, binds to actin and tropomyosin.

In terms of biological role, troponin I is the inhibitory subunit of troponin, the thin filament regulatory complex which confers calcium-sensitivity to striated muscle actomyosin ATPase activity. This Homo sapiens (Human) protein is Troponin I, fast skeletal muscle (TNNI2).